The chain runs to 436 residues: UBX domain-containing protein 7 (436 aa).

A Glycyl lysine isopeptide (Lys-Gly) (interchain with G-Cter in ubiquitin) cross-link involves residue Lys19. The interval 115–141 (AGESSSRETNPGLAREEKSSRDVHRKN) is disordered. The UBX domain occupies 212-290 (LHSSKCVLQI…ELTPRSALLL (79 aa)). Positions 325 to 346 (DKDPEVTSQREETSKPNRHEVR) are enriched in basic and acidic residues. Disordered stretches follow at residues 325–357 (DKDP…AASS) and 371–436 (SSAH…EDKK). Residues 347-357 (SSTPLSGAASS) show a composition bias toward low complexity. Residues 371–408 (SSAHASPMLTPSGTRYPSETNLTTSRSVSPNVFQFVNN) are compositionally biased toward polar residues. Ser388 carries the post-translational modification Phosphoserine. The segment covering 426–436 (HLEKKKDEDKK) has biased composition (basic and acidic residues).

In terms of assembly, interacts with CDC48.

The protein resides in the endoplasmic reticulum. In terms of biological role, involved in CDC48-dependent protein degradation through the ubiquitin/proteasome pathway. The sequence is that of UBX domain-containing protein 7 (UBX7) from Saccharomyces cerevisiae (strain ATCC 204508 / S288c) (Baker's yeast).